We begin with the raw amino-acid sequence, 202 residues long: ATP-dependent Clp protease proteolytic subunit (202 aa).

Residue Ser-106 is the Nucleophile of the active site. His-131 is an active-site residue.

Belongs to the peptidase S14 family. In terms of assembly, fourteen ClpP subunits assemble into 2 heptameric rings which stack back to back to give a disk-like structure with a central cavity, resembling the structure of eukaryotic proteasomes.

The protein resides in the cytoplasm. It carries out the reaction Hydrolysis of proteins to small peptides in the presence of ATP and magnesium. alpha-casein is the usual test substrate. In the absence of ATP, only oligopeptides shorter than five residues are hydrolyzed (such as succinyl-Leu-Tyr-|-NHMec, and Leu-Tyr-Leu-|-Tyr-Trp, in which cleavage of the -Tyr-|-Leu- and -Tyr-|-Trp bonds also occurs).. Its function is as follows. Cleaves peptides in various proteins in a process that requires ATP hydrolysis. Has a chymotrypsin-like activity. Plays a major role in the degradation of misfolded proteins. The sequence is that of ATP-dependent Clp protease proteolytic subunit from Paracidovorax citrulli (strain AAC00-1) (Acidovorax citrulli).